The sequence spans 5289 residues: Mucin-2 (5289 aa).

Residues 1–20 (MGLPLARLAAVCLALSLAGG) form the signal peptide. Serine 21 is modified (phosphoserine). Histidine 34 serves as a coordination point for Cu(2+). One can recognise a VWFD 1 domain in the interval 35–207 (NVCSTWGNFH…KINQPDVVCE (173 aa)). Intrachain disulfides connect cysteine 37-cysteine 169, cysteine 59-cysteine 206, cysteine 67-cysteine 166, cysteine 218-cysteine 255, cysteine 225-cysteine 250, cysteine 237-cysteine 275, cysteine 257-cysteine 263, cysteine 265-cysteine 291, cysteine 295-cysteine 329, cysteine 308-cysteine 321, cysteine 312-cysteine 351, cysteine 331-cysteine 345, cysteine 353-cysteine 375, cysteine 370-cysteine 387, cysteine 373-cysteine 382, cysteine 391-cysteine 528, cysteine 413-cysteine 563, cysteine 435-cysteine 443, cysteine 574-cysteine 619, cysteine 588-cysteine 614, cysteine 601-cysteine 639, cysteine 621-cysteine 627, cysteine 629-cysteine 654, cysteine 661-cysteine 698, cysteine 674-cysteine 688, cysteine 678-cysteine 718, cysteine 700-cysteine 712, cysteine 720-cysteine 742, and cysteine 740-cysteine 749. Aspartate 49 lines the Ca(2+) pocket. Cu(+)-binding residues include methionine 146 and methionine 154. Residue glutamate 156 coordinates Cu(2+). An N-linked (GlcNAc...) asparagine glycan is attached at asparagine 163. Ca(2+)-binding residues include aspartate 171, asparagine 173, leucine 175, and glutamate 180. Residue histidine 277 coordinates Cu(2+). One can recognise a TIL domain in the interval 295 to 351 (CPGNLVYLESGSPCMDTCSHLEVSSLCEEHRMDGCFCPEGTVYDDIGDSGCVPVSQC). Position 324 (histidine 324) interacts with Cu(2+). Methionine 326 provides a ligand contact to Cu(+). Residues 389-564 (GTCALEGGSH…NTWKAQSSCH (176 aa)) enclose the VWFD 2 domain. Position 403 (aspartate 403) interacts with Ca(2+). N-linked (GlcNAc...) asparagine glycosylation occurs at asparagine 423. Residues asparagine 530, asparagine 532, leucine 534, aspartate 537, and aspartate 538 each contribute to the Ca(2+) site. Asparagine 670 is a glycosylation site (N-linked (GlcNAc...) asparagine). An N-linked (GlcNAc...) asparagine glycan is attached at asparagine 770. Intrachain disulfides connect cysteine 784/cysteine 820, cysteine 802/cysteine 814, cysteine 822/cysteine 844, cysteine 839/cysteine 856, cysteine 842/cysteine 851, cysteine 860/cysteine 992, cysteine 882/cysteine 1027, cysteine 891/cysteine 989, cysteine 909/cysteine 916, cysteine 1037/cysteine 1080, cysteine 1051/cysteine 1075, cysteine 1062/cysteine 1102, cysteine 1082/cysteine 1090, cysteine 1092/cysteine 1117, cysteine 1108/cysteine 1137, cysteine 1121/cysteine 1163, cysteine 1145/cysteine 1187, cysteine 1167/cysteine 1181, cysteine 1189/cysteine 1213, cysteine 1208/cysteine 1238, and cysteine 1211/cysteine 1221. A VWFD 3 domain is found at 858-1028 (GTCSIYGSGH…NSWKEAPTCP (171 aa)). Residue aspartate 872 coordinates Ca(2+). A glycan (N-linked (GlcNAc...) asparagine) is linked at asparagine 894. Ca(2+) is bound by residues asparagine 994, aspartate 996, arginine 998, asparagine 1001, and aspartate 1002. 2 N-linked (GlcNAc...) asparagine glycosylation sites follow: asparagine 1139 and asparagine 1154. 3 N-linked (GlcNAc...) asparagine glycosylation sites follow: asparagine 1215, asparagine 1230, and asparagine 1246. Threonine 1266, threonine 1267, threonine 1269, threonine 1270, threonine 1272, threonine 1275, threonine 1276, threonine 1281, threonine 1282, and threonine 1287 each carry an O-linked (GalNAc) threonine glycan. Serine 1291 and serine 1292 each carry an O-linked (GalNAc) serine glycan. Residue threonine 1293 is glycosylated (O-linked (GalNAc) threonine). An O-linked (GalNAc) serine glycan is attached at serine 1296. An O-linked (GalNAc) threonine glycan is attached at threonine 1297. Ca(2+) contacts are provided by asparagine 1310, aspartate 1312, histidine 1313, serine 1316, aspartate 1319, glycine 1321, aspartate 1322, glutamate 1324, aspartate 1381, and tyrosine 1382. Composition is skewed to pro residues over residues 1399–1411 (PSPP…PPPT), 1419–1510 (TTTP…PITP), 1520–1549 (TTTP…PITP), 1559–1628 (TTTP…PITP), and 1638–1679 (TTTP…PPTT). Residues 1399-1773 (PSPPTTTPSP…SITPPTFSPF (375 aa)) are disordered. 6 tandem repeats follow at residues 1401–1416 (PPTT…TTTL), 1417–1432 (PPTT…TTTP), 1433–1448 (PPTT…TTTP), 1449–1464 (PPTT…TTTP), 1465–1471 (PPTTTPS), and 1472–1478 (PPTTTPS). An approximate repeats region spans residues 1401–1747 (PPTTTPSPPP…SPPTTTMTTL (347 aa)). A 7A repeat occupies 1479-1494 (PPTTTPSPPTTTTTTP). The 7B repeat unit spans residues 1495–1517 (PPTTTPSPPTTTPITPPASTTTL). The stretch at 1518-1533 (PPTTTPSPPTTTTTTP) is one 8A repeat. An 8B repeat occupies 1534-1556 (PPTTTPSPPTTTPITPPTSTTTL). The 9A repeat unit spans residues 1557–1572 (PPTTTPSPPPTTTTTP). Residues 1573–1596 (PPTTTPSPPTTTTPSPPTITTTTP) form a 9B repeat. One copy of the 10A repeat lies at 1597–1612 (PPTTTPSPPTTTTTTP). The stretch at 1613-1635 (PPTTTPSPPTTTPITPPTSTTTL) is one 10B repeat. Residues 1636-1651 (PPTTTPSPPPTTTTTP) form an 11A repeat. The 11B repeat unit spans residues 1652–1675 (PPTTTPSPPTTTTPSPPITTTTTP). 5 consecutive repeat copies span residues 1676–1683 (PPTTTPSS), 1684–1699 (PITT…MTTP), 1700–1715 (SPTT…TTTP), 1716–1731 (SSTT…MTTP), and 1732–1747 (SPTT…MTTL). Composition is skewed to low complexity over residues 1680-1720 (TPSS…STTT) and 1741-1759 (TTTM…LTTT). Residues 1760–1770 (PLPPSITPPTF) are compositionally biased toward pro residues. 2 N-linked (GlcNAc...) asparagine glycosylation sites follow: asparagine 1787 and asparagine 1820. Low complexity-rich tracts occupy residues 1885–2158 (MTTT…TMVT), 2165–4238 (GTQT…QTPT), 4269–4315 (TTVT…STAP), and 4329–4430 (STPQ…PSII). Disordered regions lie at residues 1885-4238 (MTTT…QTPT) and 4269-4430 (TTVT…PSII). 4 N-linked (GlcNAc...) asparagine glycosylation sites follow: asparagine 4449, asparagine 4461, asparagine 4472, and asparagine 4483. Positions 4492 to 4524 (PTPTPSKSTPTPSKPSSTPSKPTPGTKPPECPD) are disordered. A compositionally biased stretch (low complexity) spans 4496–4511 (PSKSTPTPSKPSSTPS). Over residues 4512–4522 (KPTPGTKPPEC) the composition is skewed to pro residues. Asparagine 4532, asparagine 4548, and asparagine 4612 each carry an N-linked (GlcNAc...) asparagine glycan. One can recognise a VWFD 4 domain in the interval 4589–4772 (CYCTGWGDPH…VNDPSKPHCP (184 aa)). Intrachain disulfides connect cysteine 4591–cysteine 4732, cysteine 4613–cysteine 4771, and cysteine 4637–cysteine 4645. Asparagine 4726 and asparagine 4737 each carry an N-linked (GlcNAc...) asparagine glycan. The segment at 4770–4795 (HCPHSSSTTKRPAVTVPGGGKTTPHK) is disordered. Residues asparagine 4862, asparagine 4897, asparagine 4991, asparagine 4998, asparagine 5065, asparagine 5080, asparagine 5129, asparagine 5148, and asparagine 5179 are each glycosylated (N-linked (GlcNAc...) asparagine). The VWFC 1 domain maps to 4927 to 4996 (CVGPDNVPRE…DTCCNITVCK (70 aa)). In terms of domain architecture, VWFC 2 spans 5034 to 5101 (GVCVHGNAEY…APGECCKKCE (68 aa)). Cystine bridges form between cysteine 5185–cysteine 5232, cysteine 5199–cysteine 5246, cysteine 5208–cysteine 5262, and cysteine 5212–cysteine 5264. Residues 5185-5270 (CSTVPVTTEV…SCQCQDTVCG (86 aa)) enclose the CTCK domain.

As to quaternary structure, homomultimer; disulfide-linked. The N- and C-terminus mediate their assembly into higher order structures to form filaments. The CTCK domains of two polypeptides associate in the endoplasmic reticulum to generate intermolecularly disulfide-bonded dimers. These dimers progress to the Golgi apparatus, which is a more acidic environment than the endoplasmic reticulum. Under acidic conditions, the N-termini form non-covalent intermolecular interactions that juxtapose assemblies of the third VWD domain (VWD3) from different CTCK-linked dimers. The VWD3 assemblies then become disulfide bonded to one another to produce long, disulfide-linked polymers that remain highly compact until secretion. Interacts with FCGBP. Interacts with AGR2; disulfide-linked. (Microbial infection) Interacts in vitro with L.monocytogenes internalin proteins InlB, InlC and InlJ; for InlC binding is slightly better at pH 5.5, (the pH of the intestine) than at pH 7.4. In terms of processing, O-glycosylated. O-glycosylation is required for mucin assembly. Goblet cells synthesize two forms of mucin that differ in branched chain O-glycosylation and the site of production in the colon. May undergo proteolytic cleavage in the outer mucus layer of the colon, contributing to the expanded volume and loose nature of this layer which allows for bacterial colonization in contrast to the inner mucus layer which is dense and devoid of bacteria. Post-translationally, at low pH of 6 and under, undergoes autocatalytic cleavage in vitro in the N-terminal region of the fourth VWD domain. It is likely that this also occurs in vivo and is triggered by the low pH of the late secretory pathway. Colon, small intestine, colonic tumors, bronchus, cervix and gall bladder.

It is found in the secreted. Functionally, coats the epithelia of the intestines and other mucus membrane-containing organs to provide a protective, lubricating barrier against particles and infectious agents at mucosal surfaces. Major constituent of the colon mucus, which is mainly formed by large polymeric networks of MUC2 secreted by goblet cells that cover the exposed surfaces of intestine. MUC2 networks form hydrogels that guard the underlying epithelium from pathogens and other hazardous matter entering from the outside world, while permitting nutrient absorption and gas exchange. Acts as a divalent copper chaperone that protects intestinal cells from copper toxicity and facilitates nutritional copper unptake into cells. Binds both Cu(2+) and its reduced form, Cu(1+), at two juxtaposed binding sites: Cu(2+), once reduced to Cu(1+) by vitamin C (ascorbate) or other dietary antioxidants, transits to the other binding site. MUC2-bound Cu(1+) is protected from oxidation in aerobic environments, and can be released for nutritional delivery to cells. Mucin gels store antimicrobial molecules that participate in innate immunity. Mucin glycoproteins also house and feed the microbiome, lubricate tissue surfaces, and may facilitate the removal of contaminants and waste products from the body. Goblet cells synthesize two forms of MUC2 mucin that differ in branched chain O-glycosylation and the site of production in the colon: a (1) 'thick' mucus that wraps the microbiota to form fecal pellets is produced in the proximal, ascending colon. 'Thick' mucus transits along the descending colon and is lubricated by a (2) 'thin' MUC2 mucus produced in the distal colon which adheres to the 'thick' mucus. The protein is Mucin-2 of Homo sapiens (Human).